The chain runs to 151 residues: NPC intracellular cholesterol transporter 2 (151 aa).

The first 19 residues, 1–19 (MRFLAATFLLLALSTAAQA), serve as a signal peptide directing secretion. Cystine bridges form between Cys27-Cys140, Cys42-Cys47, and Cys93-Cys99. Residue Asn58 is glycosylated (N-linked (GlcNAc...) asparagine). N6-acetyllysine is present on Lys116. Residue Asn135 is glycosylated (N-linked (GlcNAc...) asparagine).

The protein belongs to the NPC2 family. Interacts with NPC1 (via the second lumenal domain) in a cholestrol-dependent manner. Interacts with NUS1/NgBR, the interaction stabilizes NCP2 and regulates cholesterol trafficking. Interacts with DHDDS. Interacts with NEDD4L (via C2 domain). Interacts with NPC1L1. In terms of tissue distribution, detected in gallbladder bile. Detected in fibroblasts, kidney, liver, spleen, small intestine, placenta and testis (at protein level). Epididymis.

Its subcellular location is the secreted. It is found in the endoplasmic reticulum. The protein resides in the lysosome. The enzyme catalyses cholesterol(in) = cholesterol(out). Its function is as follows. Intracellular cholesterol transporter which acts in concert with NPC1 and plays an important role in the egress of cholesterol from the lysosomal compartment. Unesterified cholesterol that has been released from LDLs in the lumen of the late endosomes/lysosomes is transferred by NPC2 to the cholesterol-binding pocket in the N-terminal domain of NPC1. May bind and mobilize cholesterol that is associated with membranes. NPC2 binds cholesterol with a 1:1 stoichiometry. Can bind a variety of sterols, including lathosterol, desmosterol and the plant sterols stigmasterol and beta-sitosterol. The secreted form of NCP2 regulates biliary cholesterol secretion via stimulation of ABCG5/ABCG8-mediated cholesterol transport. The chain is NPC intracellular cholesterol transporter 2 from Homo sapiens (Human).